The primary structure comprises 382 residues: Lipid-A-disaccharide synthase (382 aa).

It belongs to the LpxB family.

The enzyme catalyses 2-N,3-O-bis[(3R)-3-hydroxytetradecanoyl]-alpha-D-glucosaminyl 1-phosphate + UDP-2-N,3-O-bis[(3R)-3-hydroxytetradecanoyl]-alpha-D-glucosamine = lipid A disaccharide (E. coli) + UDP + H(+). It catalyses the reaction a lipid X + a UDP-2-N,3-O-bis[(3R)-3-hydroxyacyl]-alpha-D-glucosamine = a lipid A disaccharide + UDP + H(+). It functions in the pathway glycolipid biosynthesis; lipid IV(A) biosynthesis; lipid IV(A) from (3R)-3-hydroxytetradecanoyl-[acyl-carrier-protein] and UDP-N-acetyl-alpha-D-glucosamine: step 5/6. Functionally, condensation of UDP-2,3-diacylglucosamine and 2,3-diacylglucosamine-1-phosphate to form lipid A disaccharide, a precursor of lipid A, a phosphorylated glycolipid that anchors the lipopolysaccharide to the outer membrane of the cell. The chain is Lipid-A-disaccharide synthase from Salmonella paratyphi B (strain ATCC BAA-1250 / SPB7).